A 291-amino-acid chain; its full sequence is N-acetylmannosamine kinase (291 aa).

Residues 5–12 (AIDIGGTK) and 132–139 (GVGGGVVS) each bind ATP. The Zn(2+) site is built by His-156, Cys-166, Cys-168, and Cys-173.

It belongs to the ROK (NagC/XylR) family. NanK subfamily. In terms of assembly, homodimer.

The catalysed reaction is an N-acyl-D-mannosamine + ATP = an N-acyl-D-mannosamine 6-phosphate + ADP + H(+). Its pathway is amino-sugar metabolism; N-acetylneuraminate degradation; D-fructose 6-phosphate from N-acetylneuraminate: step 2/5. Functionally, catalyzes the phosphorylation of N-acetylmannosamine (ManNAc) to ManNAc-6-P. The polypeptide is N-acetylmannosamine kinase (Escherichia coli (strain SE11)).